The following is a 243-amino-acid chain: Probable phosphatase CLI_3563 (243 aa).

H8, H10, H16, H41, E74, H102, H132, D192, and H194 together coordinate Zn(2+).

Belongs to the PHP family. Zn(2+) serves as cofactor.

The sequence is that of Probable phosphatase CLI_3563 from Clostridium botulinum (strain Langeland / NCTC 10281 / Type F).